The following is a 228-amino-acid chain: Vacuolar-sorting protein snf7 (228 aa).

2 coiled-coil regions span residues 25 to 94 (ILGL…QINA) and 125 to 226 (EKVD…QAEM).

It belongs to the SNF7 family. In terms of assembly, a component of the endosomal sorting required for transport complex III (ESCRT-III).

It localises to the cytoplasm. Its subcellular location is the endosome membrane. Required for the sorting and concentration of proteins resulting in the entry of these proteins into the invaginating vesicles of the multivesicular body (MVB). Also required for the proteolytic cleavage of the transcription factor pacc-1 in response to alkaline ambient pH. In Neurospora crassa (strain ATCC 24698 / 74-OR23-1A / CBS 708.71 / DSM 1257 / FGSC 987), this protein is Vacuolar-sorting protein snf7 (vsp-3).